Consider the following 273-residue polypeptide: Chondrolectin (273 aa).

A signal peptide spans 1–21; that stretch reads MSRVVSLLLGAALLCGHGAFC. Residues 22–216 are Extracellular-facing; it reads RRVVSGQKVC…VVTEAGIIPN (195 aa). One can recognise a C-type lectin domain in the interval 35 to 179; it reads FKHPCYKMAY…CNMKHNYICK (145 aa). 2 disulfides stabilise this stretch: Cys-61–Cys-178 and Cys-144–Cys-170. A glycan (N-linked (GlcNAc...) asparagine) is linked at Asn-86. The chain crosses the membrane as a helical span at residues 217-237; it reads LIYVVIPTIPLLLLILVAFGT. Residues 238–273 are Cytoplasmic-facing; it reads CCFQMLHKSKGRTKTSPNQSTLWISKSTRKESGMEV. The interval 248–273 is disordered; it reads GRTKTSPNQSTLWISKSTRKESGMEV. Polar residues predominate over residues 251 to 263; it reads KTSPNQSTLWISK.

In terms of assembly, interacts with RABGGTB. Post-translationally, N-glycosylated. As to expression, found in spleen, testis, prostate and fetal liver. Expression limited to vascular muscle of testis, smooth muscle of prostate stroma, heart muscle, skeletal muscle, crypts of small intestine, and red pulp of spleen. B lymphocytes express isoform 2 only; peripheral blood T lymphocytes express isoform 3 only; granulocytes and monocytes express neither isoform 2 nor isoform 3. During development of T lymphocytes, bone marrow progenitor cells express isoform 2 only; thymocytes at different stages of maturation express predominantly isoform 2 and weakly isoform 3, and mature thymocytes express only isoform 2.

The protein resides in the cytoplasm. The protein localises to the membrane. Its subcellular location is the endoplasmic reticulum. It is found in the endoplasmic reticulum membrane. May play a role in the development of the nervous system such as in neurite outgrowth and elongation. May be involved in motor axon growth and guidance. In Homo sapiens (Human), this protein is Chondrolectin (CHODL).